A 223-amino-acid polypeptide reads, in one-letter code: Golgi to ER traffic protein 1 (223 aa).

Residue methionine 1 is a topological domain, lumenal. A helical transmembrane segment spans residues 2–21 (SWVVAIAVVFVVVLKVLEYS). Residues 22-105 (TSYHDLVLQS…QIKGHLKKVK (84 aa)) are Cytoplasmic-facing. The stretch at 56 to 105 (ENKSISAQDNYAKWTKNNRKLDKLDKEITELGAQLKAHNEQIKGHLKKVK) forms a coiled coil. Residues 106 to 126 (LLLLTVPFLCFKLWKGKHIVY) form a helical membrane-spanning segment. Topologically, residues 127-177 (NLPHHQMFPQLVAGVWSQGWLYLAILPLQLAKSIVTGSSFAIETASFPHMG) are lumenal. A helical transmembrane segment spans residues 178–194 (VSLGIWLWALNSVISNI). Topologically, residues 195-223 (EFMTMQLWAKPVSKPSKKLEIVTDEIKVD) are cytoplasmic.

Belongs to the WRB/GET1 family. In terms of assembly, component of the Golgi to ER traffic (GET) complex, which is composed of GET1, GET2 and GET3. Within the complex, GET1 and GET2 form a heterotetramer which is stabilized by phosphatidylinositol binding and which binds to the GET3 homodimer.

The protein resides in the endoplasmic reticulum membrane. It is found in the golgi apparatus membrane. Required for the post-translational delivery of tail-anchored (TA) proteins to the endoplasmic reticulum. Together with GET2, acts as a membrane receptor for soluble GET3, which recognizes and selectively binds the transmembrane domain of TA proteins in the cytosol. The GET complex cooperates with the HDEL receptor ERD2 to mediate the ATP-dependent retrieval of resident ER proteins that contain a C-terminal H-D-E-L retention signal from the Golgi to the ER. The sequence is that of Golgi to ER traffic protein 1 from Candida glabrata (strain ATCC 2001 / BCRC 20586 / JCM 3761 / NBRC 0622 / NRRL Y-65 / CBS 138) (Yeast).